The primary structure comprises 310 residues: Spermatid maturation protein 1 (310 aa).

A helical transmembrane segment spans residues 29–49 (ILLLLGLIVCINIGINLVTLL). Residues 215–238 (ALSHKNNAAGSGGCVEGEQAQGQP) form a disordered region. The stretch at 262 to 286 (VYDARDVRRRLRELTQEVEALSHCY) forms a coiled coil.

As to expression, testis-specific. Exclusively present in cytoplasm of steps 14-16 elongated spermatids (at protein level).

It localises to the membrane. The protein localises to the cytoplasm. Functionally, required for proper cytoplasm removal during spermatogenesis. In Mus musculus (Mouse), this protein is Spermatid maturation protein 1 (Spem1).